The following is a 294-amino-acid chain: MTADRPALRTGDGDTRLSFGSNLSSFTEYLRGHAPELLPENRIGHRSHSTRGGDGMESGDLAPHGTTIVALTYKGGVLLAGDRRATQGNLIASRDVEKVYVTDEYSAAGIAGTAGIAIELVRLFAVELEHYEKIEGVPLTFDGKANRLASMVRGNLGAAMQGLAVVPLLVGYDLDADEEARAGRIVSYDVVGGRYEERAGYHAVGSGSLFAKSALKKIYSPDSDEETALRAAIESLYDAADDDSATGGPDLTRGIYPTAVTITQAGAVHVSEETTSELARRIVAERTEEGGSAR.

The propeptide at 1–65 is removed in mature form; by autocatalysis; that stretch reads MTADRPALRT…MESGDLAPHG (65 aa). T66 acts as the Nucleophile in catalysis.

The protein belongs to the peptidase T1B family. In terms of assembly, the 20S proteasome core is composed of 14 alpha and 14 beta subunits that assemble into four stacked heptameric rings, resulting in a barrel-shaped structure. The two inner rings, each composed of seven catalytic beta subunits, are sandwiched by two outer rings, each composed of seven alpha subunits. The catalytic chamber with the active sites is on the inside of the barrel. Has a gated structure, the ends of the cylinder being occluded by the N-termini of the alpha-subunits. Is capped by the proteasome-associated ATPase, ARC.

The protein resides in the cytoplasm. The catalysed reaction is Cleavage of peptide bonds with very broad specificity.. It functions in the pathway protein degradation; proteasomal Pup-dependent pathway. With respect to regulation, the formation of the proteasomal ATPase ARC-20S proteasome complex, likely via the docking of the C-termini of ARC into the intersubunit pockets in the alpha-rings, may trigger opening of the gate for substrate entry. Interconversion between the open-gate and close-gate conformations leads to a dynamic regulation of the 20S proteasome proteolysis activity. Component of the proteasome core, a large protease complex with broad specificity involved in protein degradation. The sequence is that of Proteasome subunit beta from Rhodococcus opacus (strain B4).